A 284-amino-acid polypeptide reads, in one-letter code: Actin-like protein ARP10 (284 aa).

Belongs to the actin family. ARP10 subfamily. Self-associates. Component of the dynactin complex composed of at least ARP1, JNM1, NIP100 and ARP10. Dynactin comprises a short rod of the ARP1 filament attached to ARP10 at its pointed-end and probably associated with the capping protein at its barbed-end. The rod is implicated in dynein cargo binding. A sidearm formed by NIP100 projects from the ARP1 filament and is implicated in motor binding. Interacts with ARP1 and JNM1.

Its subcellular location is the cytoplasm. It is found in the cytoskeleton. In terms of biological role, pointed-end-associated component of the dynactin complex which assists cytoplasmic dynein by increasing its processivity and by regulation of its cargo binding. The dynactin complex is required for the spindle translocation late in anaphase and is involved in a cell wall synthesis checkpoint. May regulate the association of the dynactin complex with the plasma membrane. The polypeptide is Actin-like protein ARP10 (ARP10) (Saccharomyces cerevisiae (strain ATCC 204508 / S288c) (Baker's yeast)).